We begin with the raw amino-acid sequence, 347 residues long: Iron-sulfur cluster assembly protein SufC (347 aa).

The ABC transporter domain occupies 100–346 (LEIKDLHAIE…ENKGYSQFLK (247 aa)). ATP is bound at residue 134 to 141 (GRNGSGKS).

This sequence belongs to the ABC transporter superfamily. Ycf16 family. As to quaternary structure, component of a complex composed of SufB, SufC and SufD in a stoichiometric ratio of 1:2:1. Interacts with SufB. Interacts with SufD; the interaction enhances the ATPase activity of SufC. Post-translationally, proteolytically cleaved.

The protein resides in the plastid. It is found in the apicoplast. The enzyme catalyses ATP + H2O = ADP + phosphate + H(+). It functions in the pathway cofactor biosynthesis; iron-sulfur cluster biosynthesis. Its function is as follows. Participates in the sulfur mobilization (SUF) pathway for iron-sulfur (Fe-S) cluster biogenesis. As part of a complex consisting of SufB-SufC(2)-SufD, involved in assembly of [4Fe-4S] clusters. Exhibits ATPase activity. The sequence is that of Iron-sulfur cluster assembly protein SufC from Plasmodium falciparum (isolate 3D7).